Consider the following 631-residue polypeptide: Dolichyl-diphosphooligosaccharide--protein glycosyltransferase subunit 2 (631 aa).

An N-terminal signal peptide occupies residues 1–22 (MAPPGSSAVFLLALTITASVQA). Residues 23–540 (LTPTHYLTKQ…REPEKRPPTV (518 aa)) lie on the Lumenal side of the membrane. N-linked (GlcNAc...) asparagine glycosylation is present at Asn-106. Residue Lys-154 forms a Glycyl lysine isopeptide (Lys-Gly) (interchain with G-Cter in ubiquitin) linkage. Residues 541–561 (VSNTFTALILSPLLLLFALWI) traverse the membrane as a helical segment. The Cytoplasmic segment spans residues 562–571 (RIGANVSNFT). A helical membrane pass occupies residues 572-592 (FAPSTVIFHLGHAAMLGLMYI). Residues 593-596 (YWTQ) lie on the Lumenal side of the membrane. A helical membrane pass occupies residues 597–617 (LNMFQTLKYLAVLGTVTFLAG). At 618-631 (NRMLAQHAVKRTAH) the chain is on the cytoplasmic side.

The protein belongs to the SWP1 family. Component of the oligosaccharyltransferase (OST) complex. OST exists in two different complex forms which contain common core subunits RPN1, RPN2, OST48, OST4, DAD1 and TMEM258, either STT3A or STT3B as catalytic subunits, and form-specific accessory subunits. STT3A complex assembly occurs through the formation of 3 subcomplexes. Subcomplex 1 contains RPN1 and TMEM258, subcomplex 2 contains the STT3A-specific subunits STT3A, DC2/OSTC, and KCP2 as well as the core subunit OST4, and subcomplex 3 contains RPN2, DAD1, and OST48. The STT3A complex can form stable complexes with the Sec61 complex or with both the Sec61 and TRAP complexes. Interacts with DDI2. Interacts with TMEM35A/NACHO.

It is found in the endoplasmic reticulum. Its subcellular location is the endoplasmic reticulum membrane. It functions in the pathway protein modification; protein glycosylation. Its function is as follows. Subunit of the oligosaccharyl transferase (OST) complex that catalyzes the initial transfer of a defined glycan (Glc(3)Man(9)GlcNAc(2) in eukaryotes) from the lipid carrier dolichol-pyrophosphate to an asparagine residue within an Asn-X-Ser/Thr consensus motif in nascent polypeptide chains, the first step in protein N-glycosylation. N-glycosylation occurs cotranslationally and the complex associates with the Sec61 complex at the channel-forming translocon complex that mediates protein translocation across the endoplasmic reticulum (ER). All subunits are required for a maximal enzyme activity. The protein is Dolichyl-diphosphooligosaccharide--protein glycosyltransferase subunit 2 of Mus musculus (Mouse).